The sequence spans 201 residues: Large ribosomal subunit protein bL25 (201 aa).

A disordered region spans residues V179–E201. Positions K190–E201 are enriched in acidic residues.

It belongs to the bacterial ribosomal protein bL25 family. CTC subfamily. In terms of assembly, part of the 50S ribosomal subunit; part of the 5S rRNA/L5/L18/L25 subcomplex. Contacts the 5S rRNA. Binds to the 5S rRNA independently of L5 and L18.

This is one of the proteins that binds to the 5S RNA in the ribosome where it forms part of the central protuberance. In Prosthecochloris aestuarii (strain DSM 271 / SK 413), this protein is Large ribosomal subunit protein bL25.